The following is a 339-amino-acid chain: uncharacterized protein (339 aa).

The 231-residue stretch at 13 to 243 (LSLNKLDVGF…PATPFICEFI (231 aa)) folds into the ABC transporter domain. 45-52 (GPSGSGKS) is a binding site for ATP.

The protein belongs to the ABC transporter superfamily.

It localises to the cell inner membrane. In terms of biological role, probably part of a binding-protein-dependent transport system y4fNOP. Probably responsible for energy coupling to the transport system. This is an uncharacterized protein from Sinorhizobium fredii (strain NBRC 101917 / NGR234).